The primary structure comprises 651 residues: Probable export ATP-binding/permease protein Pfl01_2215 (651 aa).

Residues 6-244 (LQLTGISRSF…LSNEDAVPKS (239 aa)) form the ABC transporter domain. ATP is bound at residue 42-49 (GASGSGKS). Helical transmembrane passes span 250–270 (LVAS…ALIS), 276–296 (LLTM…SAIG), 524–544 (LALL…IGVM), 585–605 (LGGA…SLFI), and 614–634 (LTSV…FGFV).

This sequence belongs to the ABC transporter superfamily. Macrolide exporter (TC 3.A.1.122) family. Probably part of a tripartite efflux system, which is composed of an inner membrane transporter, a periplasmic membrane fusion protein, and an outer membrane component.

The protein resides in the cell inner membrane. Probably part of a tripartite efflux system. The polypeptide is Probable export ATP-binding/permease protein Pfl01_2215 (Pseudomonas fluorescens (strain Pf0-1)).